The chain runs to 274 residues: Rhamnulose-1-phosphate aldolase (274 aa).

The active site involves glutamate 117. 3 residues coordinate Zn(2+): histidine 141, histidine 143, and histidine 212.

Belongs to the aldolase class II family. RhaD subfamily. In terms of assembly, homotetramer. Zn(2+) is required as a cofactor.

It is found in the cytoplasm. It catalyses the reaction L-rhamnulose 1-phosphate = (S)-lactaldehyde + dihydroxyacetone phosphate. Its pathway is carbohydrate degradation; L-rhamnose degradation; glycerone phosphate from L-rhamnose: step 3/3. In terms of biological role, catalyzes the reversible cleavage of L-rhamnulose-1-phosphate to dihydroxyacetone phosphate (DHAP) and L-lactaldehyde. The chain is Rhamnulose-1-phosphate aldolase from Escherichia coli (strain K12 / MC4100 / BW2952).